Reading from the N-terminus, the 403-residue chain is Chromatin structure-remodeling complex subunit SFH1 (403 aa).

A disordered region spans residues 58–115 (FPTFDIDSDSNDEEQSSASAGNDDPQANANGGEAAGVNGQGSGDGGSANTGAGRHGKS). The segment covering 63-72 (IDSDSNDEEQ) has biased composition (acidic residues). Positions 84-94 (ANANGGEAAGV) are enriched in low complexity. The segment covering 95–105 (NGQGSGDGGSA) has biased composition (gly residues).

This sequence belongs to the SNF5 family.

It is found in the nucleus. In terms of biological role, part of the chromatin structure-remodeling complex (RSC) which is involved in transcription regulation and nucleosome positioning. RSC is responsible for the transfer of a histone octamer from a nucleosome core particle to naked DNA. The reaction requires ATP and involves an activated RSC-nucleosome intermediate. Remodeling reaction also involves DNA translocation, DNA twist and conformational change. As a reconfigurer of centromeric and flanking nucleosomes, RSC complex is required both for proper kinetochore function in chromosome segregation and, via a PKC1-dependent signaling pathway, for organization of the cellular cytoskeleton. This subunit is essential for mitotic growth and required for cell cycle progression. The sequence is that of Chromatin structure-remodeling complex subunit SFH1 (SFH1) from Candida glabrata (strain ATCC 2001 / BCRC 20586 / JCM 3761 / NBRC 0622 / NRRL Y-65 / CBS 138) (Yeast).